Here is a 362-residue protein sequence, read N- to C-terminus: UDP-N-acetylglucosamine--N-acetylmuramyl-(pentapeptide) pyrophosphoryl-undecaprenol N-acetylglucosamine transferase (362 aa).

UDP-N-acetyl-alpha-D-glucosamine contacts are provided by R166, S196, and Q290.

The protein belongs to the glycosyltransferase 28 family. MurG subfamily.

The protein localises to the cell membrane. The catalysed reaction is Mur2Ac(oyl-L-Ala-gamma-D-Glu-L-Lys-D-Ala-D-Ala)-di-trans,octa-cis-undecaprenyl diphosphate + UDP-N-acetyl-alpha-D-glucosamine = beta-D-GlcNAc-(1-&gt;4)-Mur2Ac(oyl-L-Ala-gamma-D-Glu-L-Lys-D-Ala-D-Ala)-di-trans,octa-cis-undecaprenyl diphosphate + UDP + H(+). It participates in cell wall biogenesis; peptidoglycan biosynthesis. Cell wall formation. Catalyzes the transfer of a GlcNAc subunit on undecaprenyl-pyrophosphoryl-MurNAc-pentapeptide (lipid intermediate I) to form undecaprenyl-pyrophosphoryl-MurNAc-(pentapeptide)GlcNAc (lipid intermediate II). The sequence is that of UDP-N-acetylglucosamine--N-acetylmuramyl-(pentapeptide) pyrophosphoryl-undecaprenol N-acetylglucosamine transferase from Staphylococcus carnosus (strain TM300).